The chain runs to 331 residues: Pectinesterase (331 aa).

Residues methionine 1–alanine 17 form the signal peptide. Glutamine 138 is a binding site for substrate. Aspartate 161 functions as the Proton donor in the catalytic mechanism. Aspartate 182 functions as the Nucleophile in the catalytic mechanism. Arginine 247 and tryptophan 249 together coordinate substrate.

It belongs to the pectinesterase family.

It localises to the secreted. It catalyses the reaction [(1-&gt;4)-alpha-D-galacturonosyl methyl ester](n) + n H2O = [(1-&gt;4)-alpha-D-galacturonosyl](n) + n methanol + n H(+). Its pathway is glycan metabolism; pectin degradation; 2-dehydro-3-deoxy-D-gluconate from pectin: step 1/5. In terms of biological role, involved in maceration and soft-rotting of plant tissue. The chain is Pectinesterase (pme1) from Aspergillus niger.